Here is a 649-residue protein sequence, read N- to C-terminus: Sulfate transporter 1.1 (649 aa).

The disordered stretch occupies residues 1 to 20; the sequence is MSGTINPPDGGGSGARNPPV. Residues 1-86 are Cytoplasmic-facing; that stretch reads MSGTINPPDG…AREYTLRKFR (86 aa). A helical transmembrane segment spans residues 87–107; the sequence is GDLIAGLTIASLCIPQDIGYA. Over 108 to 111 the chain is Extracellular; that stretch reads KLAN. Residues 112–132 form a helical membrane-spanning segment; sequence VDPKYGLYSSFVPPLIYAGMG. Residues 133–136 are Cytoplasmic-facing; sequence SSRD. The helical transmembrane segment at 137-157 threads the bilayer; that stretch reads IAIGPVAVVSLLVGTLCQAVI. Over 158 to 168 the chain is Extracellular; that stretch reads DPKKNPEDYLR. 2 helical membrane passes run 169–189 and 190–210; these read LVFT…FLRL and GFLI…GAAI. Topologically, residues 211-248 are extracellular; the sequence is TIALQQLKGFLGIKTFTKKTDIVSVMHSVFKNAEHGWN. The chain crosses the membrane as a helical span at residues 249 to 269; it reads WQTIVIGASFLTFLLVTKFIG. The Cytoplasmic segment spans residues 270-275; it reads KRNRKL. A helical transmembrane segment spans residues 276 to 296; the sequence is FWVPAIAPLISVIISTFFVFI. Topologically, residues 297–334 are extracellular; it reads FRADKQGVQIVKHIDQGINPISVHKIFFSGKYFTEGIR. Residues 335–355 form a helical membrane-spanning segment; the sequence is IGGIAGMVALTEAVAIARTFA. Residues 356–367 are Cytoplasmic-facing; that stretch reads AMKDYQIDGNKE. The helical transmembrane segment at 368–388 threads the bilayer; it reads MIALGTMNVVGSMTSCYIATG. Residues 389–404 lie on the Extracellular side of the membrane; sequence SFSRSAVNFMAGVETA. A helical transmembrane segment spans residues 405–425; the sequence is VSNIVMAIVVALTLEFITPLF. Residues 426–431 are Cytoplasmic-facing; that stretch reads KYTPNA. Residues 432-452 traverse the membrane as a helical segment; sequence ILAAIIISAVLGLIDIDAAIL. Residues 453 to 465 are Extracellular-facing; that stretch reads IWRIDKLDFLACM. Residues 466–486 traverse the membrane as a helical segment; that stretch reads GAFLGVIFISVEIGLLIAVVI. At 487–649 the chain is on the cytoplasmic side; that stretch reads SFAKILLQVT…CSTEVAEQQT (163 aa). The STAS domain occupies 517–640; that stretch reads QYPDAAQIPG…LTVGDAVAVC (124 aa).

Belongs to the SLC26A/SulP transporter (TC 2.A.53) family. As to quaternary structure, interacts with OASA1 through its STAS domain. In terms of tissue distribution, expressed in lateral root cap, root hairs, epidermal and cortical cells of roots.

It localises to the membrane. In terms of biological role, high-affinity H(+)/sulfate cotransporter that mediates the uptake of the environmental sulfate by plant roots under low-sulfur conditions. Plays a central role in the regulation of sulfate assimilation. This Arabidopsis thaliana (Mouse-ear cress) protein is Sulfate transporter 1.1 (SULTR1;1).